A 578-amino-acid polypeptide reads, in one-letter code: Lysine--tRNA ligase (578 aa).

2 residues coordinate Mg(2+): glutamate 414 and glutamate 421.

The protein belongs to the class-II aminoacyl-tRNA synthetase family. As to quaternary structure, homodimer. Requires Mg(2+) as cofactor.

Its subcellular location is the cytoplasm. The enzyme catalyses tRNA(Lys) + L-lysine + ATP = L-lysyl-tRNA(Lys) + AMP + diphosphate. The chain is Lysine--tRNA ligase from Porphyromonas gingivalis (strain ATCC 33277 / DSM 20709 / CIP 103683 / JCM 12257 / NCTC 11834 / 2561).